The primary structure comprises 2067 residues: Negative regulator of mitosis (2067 aa).

Positions 100 to 118 (SLAIPQTTSQQSNRPSGSE) are enriched in polar residues. Disordered stretches follow at residues 100-132 (SLAIPQTTSQQSNRPSGSESLDGKESRRSSTSK), 332-408 (ESIP…DDFA), and 452-480 (GSQSSTIHPGGLRQSIGAGSTRGSFGFNP). Residues 336-347 (SHRKKKRRDTGG) carry the Nuclear localization signal motif. Over residues 336–355 (SHRKKKRRDTGGTRSKRRSS) the composition is skewed to basic residues. Positions 384–396 (WNASVMSHSQYST) are enriched in polar residues. 4 PC repeats span residues 1434–1465 (AGIMGIGLLYCNSQHRRMSEVMLSEIENADQE), 1482–1520 (AAGFALGFINLGKGKDLKGMRDMHIVERLLAVAVGTKNV), 1532–1562 (GATIALAIIFMKTNDETLAQKVDIPDTTVRF), and 1625–1659 (GLCFALGLRFAGSPDPTVRDILLSYLDQFIRISRL). The interval 2020–2042 (FPSESDEEKRDRQETGSMPSSGH) is disordered.

It belongs to the APC1 family.

Functionally, negative regulator of mitosis in E.nidulans. This protein is part of a regulatory pathway that includes the nimA protein kinase. It is required to prevent premature entry into mitosis. Mutations to this protein both cause cells to enter mitosis and prevent them from leaving mitosis. This Emericella nidulans (strain FGSC A4 / ATCC 38163 / CBS 112.46 / NRRL 194 / M139) (Aspergillus nidulans) protein is Negative regulator of mitosis (bimE).